A 506-amino-acid chain; its full sequence is Probable cytosol aminopeptidase (506 aa).

Mn(2+) is bound by residues Lys-270 and Asp-275. Lys-282 is a catalytic residue. 3 residues coordinate Mn(2+): Asp-293, Asp-352, and Glu-354. The active site involves Arg-356.

Belongs to the peptidase M17 family. It depends on Mn(2+) as a cofactor.

The protein resides in the cytoplasm. The enzyme catalyses Release of an N-terminal amino acid, Xaa-|-Yaa-, in which Xaa is preferably Leu, but may be other amino acids including Pro although not Arg or Lys, and Yaa may be Pro. Amino acid amides and methyl esters are also readily hydrolyzed, but rates on arylamides are exceedingly low.. The catalysed reaction is Release of an N-terminal amino acid, preferentially leucine, but not glutamic or aspartic acids.. Presumably involved in the processing and regular turnover of intracellular proteins. Catalyzes the removal of unsubstituted N-terminal amino acids from various peptides. The sequence is that of Probable cytosol aminopeptidase from Photorhabdus laumondii subsp. laumondii (strain DSM 15139 / CIP 105565 / TT01) (Photorhabdus luminescens subsp. laumondii).